The following is a 456-amino-acid chain: Na(+)/H(+) antiporter NhaA 3 (456 aa).

The next 11 helical transmembrane spans lie at 32–52, 87–107, 114–134, 145–165, 174–194, 202–222, 233–253, 318–338, 347–367, 382–402, and 417–437; these read IEATSGAVLLLATVVALTLSN, GLMTLFFFIVALEIKREVVLG, MVALSVVAAAGGMLVPMGLYL, GWGVVMPTDTAFVIGCLALLG, VFLLSLAVVDDLAAILVVAVG, TALALGAVGLVIIRGMALLGV, AIIWLAVNASGIHATIVGVIL, WVAFGVMPLFALANAGVPITI, LAVMAGFVLGKPIGVTAFAWL, WGGLVGGALLTGIGFTMALFI, and LGILAASVVSSVAGLTLLCAL.

It belongs to the NhaA Na(+)/H(+) (TC 2.A.33) antiporter family.

The protein localises to the cell inner membrane. The enzyme catalyses Na(+)(in) + 2 H(+)(out) = Na(+)(out) + 2 H(+)(in). In terms of biological role, na(+)/H(+) antiporter that extrudes sodium in exchange for external protons. The polypeptide is Na(+)/H(+) antiporter NhaA 3 (Acidiphilium cryptum (strain JF-5)).